The primary structure comprises 282 residues: Bis(5'-nucleosyl)-tetraphosphatase, symmetrical (282 aa).

Belongs to the Ap4A hydrolase family.

The enzyme catalyses P(1),P(4)-bis(5'-adenosyl) tetraphosphate + H2O = 2 ADP + 2 H(+). In terms of biological role, hydrolyzes diadenosine 5',5'''-P1,P4-tetraphosphate to yield ADP. The polypeptide is Bis(5'-nucleosyl)-tetraphosphatase, symmetrical (Klebsiella pneumoniae (strain 342)).